The chain runs to 454 residues: CCA-adding enzyme (454 aa).

The ATP site is built by Ser-53 and Lys-56. Residues Ser-53 and Lys-56 each coordinate CTP. The Mg(2+) site is built by Asp-65, Asp-67, and Asp-119. The ATP site is built by His-142, Lys-161, and Tyr-170. CTP contacts are provided by His-142, Lys-161, and Tyr-170.

This sequence belongs to the tRNA nucleotidyltransferase/poly(A) polymerase family. Archaeal CCA-adding enzyme subfamily. In terms of assembly, homodimer. Mg(2+) serves as cofactor.

It carries out the reaction a tRNA precursor + 2 CTP + ATP = a tRNA with a 3' CCA end + 3 diphosphate. The enzyme catalyses a tRNA with a 3' CCA end + 2 CTP + ATP = a tRNA with a 3' CCACCA end + 3 diphosphate. Its function is as follows. Catalyzes the addition and repair of the essential 3'-terminal CCA sequence in tRNAs without using a nucleic acid template. Adds these three nucleotides in the order of C, C, and A to the tRNA nucleotide-73, using CTP and ATP as substrates and producing inorganic pyrophosphate. tRNA 3'-terminal CCA addition is required both for tRNA processing and repair. Also involved in tRNA surveillance by mediating tandem CCA addition to generate a CCACCA at the 3' terminus of unstable tRNAs. While stable tRNAs receive only 3'-terminal CCA, unstable tRNAs are marked with CCACCA and rapidly degraded. The protein is CCA-adding enzyme of Thermococcus gammatolerans (strain DSM 15229 / JCM 11827 / EJ3).